Consider the following 145-residue polypeptide: Small ribosomal subunit protein uS12 (145 aa).

This sequence belongs to the universal ribosomal protein uS12 family. In terms of assembly, part of the 30S ribosomal subunit.

Functionally, with S4 and S5 plays an important role in translational accuracy. Located at the interface of the 30S and 50S subunits. The sequence is that of Small ribosomal subunit protein uS12 from Cenarchaeum symbiosum (strain A).